We begin with the raw amino-acid sequence, 236 residues long: Small ribosomal subunit protein eS6 (236 aa).

Phosphoserine is present on residues serine 232 and serine 233.

It belongs to the eukaryotic ribosomal protein eS6 family. In terms of processing, phosphorylated.

The polypeptide is Small ribosomal subunit protein eS6 (RPS6) (Eremothecium gossypii (strain ATCC 10895 / CBS 109.51 / FGSC 9923 / NRRL Y-1056) (Yeast)).